The following is a 553-amino-acid chain: CTP synthase (553 aa).

Positions 1-266 (MTKNYIFITG…DNYICEYFKL (266 aa)) are amidoligase domain. A CTP-binding site is contributed by serine 14. Serine 14 provides a ligand contact to UTP. ATP-binding positions include 15 to 20 (SLGKGI) and aspartate 72. The Mg(2+) site is built by aspartate 72 and glutamate 140. Residues 147-149 (DIE), 187-192 (KTKPTQ), and lysine 223 contribute to the CTP site. UTP is bound by residues 187-192 (KTKPTQ) and lysine 223. 239-241 (KDV) is a binding site for ATP. Residues 291–544 (IIGIIGKYIK…IKSAKKNKKN (254 aa)) enclose the Glutamine amidotransferase type-1 domain. Glycine 352 lines the L-glutamine pocket. Cysteine 379 acts as the Nucleophile; for glutamine hydrolysis in catalysis. L-glutamine-binding positions include 380–383 (LGMQ), glutamate 403, and arginine 472. Catalysis depends on residues histidine 517 and glutamate 519.

The protein belongs to the CTP synthase family. As to quaternary structure, homotetramer.

The enzyme catalyses UTP + L-glutamine + ATP + H2O = CTP + L-glutamate + ADP + phosphate + 2 H(+). It catalyses the reaction L-glutamine + H2O = L-glutamate + NH4(+). It carries out the reaction UTP + NH4(+) + ATP = CTP + ADP + phosphate + 2 H(+). Its pathway is pyrimidine metabolism; CTP biosynthesis via de novo pathway; CTP from UDP: step 2/2. Its activity is regulated as follows. Allosterically activated by GTP, when glutamine is the substrate; GTP has no effect on the reaction when ammonia is the substrate. The allosteric effector GTP functions by stabilizing the protein conformation that binds the tetrahedral intermediate(s) formed during glutamine hydrolysis. Inhibited by the product CTP, via allosteric rather than competitive inhibition. In terms of biological role, catalyzes the ATP-dependent amination of UTP to CTP with either L-glutamine or ammonia as the source of nitrogen. Regulates intracellular CTP levels through interactions with the four ribonucleotide triphosphates. The chain is CTP synthase from Buchnera aphidicola subsp. Schizaphis graminum (strain Sg).